Reading from the N-terminus, the 340-residue chain is DNA-directed RNA polymerase subunit alpha (340 aa).

Residues 1-233 form an alpha N-terminal domain (alpha-NTD) region; it reads MIQDEIPIPV…DLFIIFLNME (233 aa). Residues 264 to 340 are alpha C-terminal domain (alpha-CTD); the sequence is AKEVAFKQIF…QLPKDQFNIS (77 aa).

The protein belongs to the RNA polymerase alpha chain family. In plastids the minimal PEP RNA polymerase catalytic core is composed of four subunits: alpha, beta, beta', and beta''. When a (nuclear-encoded) sigma factor is associated with the core the holoenzyme is formed, which can initiate transcription.

The protein localises to the plastid. Its subcellular location is the chloroplast. It catalyses the reaction RNA(n) + a ribonucleoside 5'-triphosphate = RNA(n+1) + diphosphate. Its function is as follows. DNA-dependent RNA polymerase catalyzes the transcription of DNA into RNA using the four ribonucleoside triphosphates as substrates. The chain is DNA-directed RNA polymerase subunit alpha from Psilotum nudum (Whisk fern).